We begin with the raw amino-acid sequence, 419 residues long: UDP-N-acetylglucosamine 1-carboxyvinyltransferase (419 aa).

22 to 23 (KN) is a phosphoenolpyruvate binding site. UDP-N-acetyl-alpha-D-glucosamine is bound at residue Arg93. Cys117 functions as the Proton donor in the catalytic mechanism. Cys117 carries the post-translational modification 2-(S-cysteinyl)pyruvic acid O-phosphothioketal. 2 residues coordinate UDP-N-acetyl-alpha-D-glucosamine: Asp306 and Val328.

It belongs to the EPSP synthase family. MurA subfamily.

It localises to the cytoplasm. The enzyme catalyses phosphoenolpyruvate + UDP-N-acetyl-alpha-D-glucosamine = UDP-N-acetyl-3-O-(1-carboxyvinyl)-alpha-D-glucosamine + phosphate. The protein operates within cell wall biogenesis; peptidoglycan biosynthesis. Functionally, cell wall formation. Adds enolpyruvyl to UDP-N-acetylglucosamine. This Thioalkalivibrio sulfidiphilus (strain HL-EbGR7) protein is UDP-N-acetylglucosamine 1-carboxyvinyltransferase.